A 230-amino-acid chain; its full sequence is Peptidyl-prolyl cis-trans isomerase FKBP16-4, chloroplastic (230 aa).

The transit peptide at 1-56 directs the protein to the chloroplast; sequence MILTMKLVHPLHHSLSSSIPFPSRKRQSKPYRCSLPSPGCEKVIRTETVLPPAPVS. Residues 123-217 enclose the PPIase FKBP-type domain; sequence GSRVAVHYVA…ELDIELLSIK (95 aa).

Belongs to the FKBP-type PPIase family.

The protein localises to the plastid. Its subcellular location is the chloroplast thylakoid lumen. The enzyme catalyses [protein]-peptidylproline (omega=180) = [protein]-peptidylproline (omega=0). Its function is as follows. PPIases accelerate the folding of proteins. It catalyzes the cis-trans isomerization of proline imidic peptide bonds in oligopeptides. The sequence is that of Peptidyl-prolyl cis-trans isomerase FKBP16-4, chloroplastic (FKBP16-4) from Arabidopsis thaliana (Mouse-ear cress).